A 259-amino-acid polypeptide reads, in one-letter code: 5'-nucleotidase SurE (259 aa).

4 residues coordinate a divalent metal cation: Asp10, Asp11, Ser41, and Asn96.

This sequence belongs to the SurE nucleotidase family. Requires a divalent metal cation as cofactor.

Its subcellular location is the cytoplasm. It carries out the reaction a ribonucleoside 5'-phosphate + H2O = a ribonucleoside + phosphate. Functionally, nucleotidase that shows phosphatase activity on nucleoside 5'-monophosphates. In Wolinella succinogenes (strain ATCC 29543 / DSM 1740 / CCUG 13145 / JCM 31913 / LMG 7466 / NCTC 11488 / FDC 602W) (Vibrio succinogenes), this protein is 5'-nucleotidase SurE.